We begin with the raw amino-acid sequence, 381 residues long: Cytochrome b (381 aa).

4 helical membrane passes run 36 to 56 (FGSL…FLTM), 80 to 101 (WLIR…YIHI), 116 to 136 (WMVG…GYVL), and 181 to 201 (FYTF…IHLL). Positions 86 and 100 each coordinate heme b. Histidine 185 and histidine 199 together coordinate heme b. Histidine 204 contributes to the a ubiquinone binding site. Transmembrane regions (helical) follow at residues 229–249 (FKDM…TLTN), 291–311 (LGGV…PLTF), 323–343 (MNQI…WIGA), and 350–370 (YVFV…INPM).

Belongs to the cytochrome b family. The main subunits of complex b-c1 are: cytochrome b, cytochrome c1 and the Rieske protein. Heme b serves as cofactor.

The protein resides in the mitochondrion inner membrane. In terms of biological role, component of the ubiquinol-cytochrome c reductase complex (complex III or cytochrome b-c1 complex) that is part of the mitochondrial respiratory chain. The b-c1 complex mediates electron transfer from ubiquinol to cytochrome c. Contributes to the generation of a proton gradient across the mitochondrial membrane that is then used for ATP synthesis. In Ostrinia nubilalis (European corn borer), this protein is Cytochrome b (MT-CYB).